Reading from the N-terminus, the 229-residue chain is Cell division protein FtsQ (229 aa).

Residues 1 to 21 (MIVLLCVIFAFLVYSNWHSWL) traverse the membrane as a helical segment. The Periplasmic segment spans residues 22–229 (ESLDRNPIRA…AAVGFSPLPK (208 aa)). The 71-residue stretch at 27 to 97 (NPIRAYALTH…DRLSITLIEH (71 aa)) folds into the POTRA domain.

The protein belongs to the FtsQ/DivIB family. FtsQ subfamily. Part of a complex composed of FtsB, FtsL and FtsQ.

Its subcellular location is the cell inner membrane. Its function is as follows. Essential cell division protein. May link together the upstream cell division proteins, which are predominantly cytoplasmic, with the downstream cell division proteins, which are predominantly periplasmic. May control correct divisome assembly. The sequence is that of Cell division protein FtsQ from Actinobacillus pleuropneumoniae serotype 3 (strain JL03).